We begin with the raw amino-acid sequence, 377 residues long: Lipoyl synthase, mitochondrial (377 aa).

The [4Fe-4S] cluster site is built by Cys-98, Cys-103, Cys-109, Cys-128, Cys-132, Cys-135, and Ser-343. Residues 113 to 332 (KKSEATATIM…RDTALDMGFL (220 aa)) enclose the Radical SAM core domain.

This sequence belongs to the radical SAM superfamily. Lipoyl synthase family. Requires [4Fe-4S] cluster as cofactor.

The protein resides in the mitochondrion. It carries out the reaction [[Fe-S] cluster scaffold protein carrying a second [4Fe-4S](2+) cluster] + N(6)-octanoyl-L-lysyl-[protein] + 2 oxidized [2Fe-2S]-[ferredoxin] + 2 S-adenosyl-L-methionine + 4 H(+) = [[Fe-S] cluster scaffold protein] + N(6)-[(R)-dihydrolipoyl]-L-lysyl-[protein] + 4 Fe(3+) + 2 hydrogen sulfide + 2 5'-deoxyadenosine + 2 L-methionine + 2 reduced [2Fe-2S]-[ferredoxin]. It functions in the pathway protein modification; protein lipoylation via endogenous pathway; protein N(6)-(lipoyl)lysine from octanoyl-[acyl-carrier-protein]: step 2/2. Catalyzes the radical-mediated insertion of two sulfur atoms into the C-6 and C-8 positions of the octanoyl moiety bound to the lipoyl domains of lipoate-dependent enzymes, thereby converting the octanoylated domains into lipoylated derivatives. This chain is Lipoyl synthase, mitochondrial, found in Candida tropicalis (strain ATCC MYA-3404 / T1) (Yeast).